The sequence spans 245 residues: MISHILLDIEGTTCPVTFVTETLFPYAQLALKDFLERHKDDPSISQLINNAEDEWMQDQDKQSATLRHSSEEIQQPKHLKIESYLQLLIASDKKSTALKDIQGKVWKEGYTTGKITSELFEDAYEGLKKWHKQGFTLGIYSSGSVEAQRLLYKYTSKGDIENLFSHWFDTHIGNKKEQRSYTAIASSMACKPQNILFISDNSDECDAAKGAGLFTLYSLREGNPQQEPRDHPIIINLGDVDQWLK.

This sequence belongs to the HAD-like hydrolase superfamily. MasA/MtnC family. As to quaternary structure, monomer. It depends on Mg(2+) as a cofactor.

It catalyses the reaction 5-methylsulfanyl-2,3-dioxopentyl phosphate + H2O = 1,2-dihydroxy-5-(methylsulfanyl)pent-1-en-3-one + phosphate. It functions in the pathway amino-acid biosynthesis; L-methionine biosynthesis via salvage pathway; L-methionine from S-methyl-5-thio-alpha-D-ribose 1-phosphate: step 3/6. The protein operates within amino-acid biosynthesis; L-methionine biosynthesis via salvage pathway; L-methionine from S-methyl-5-thio-alpha-D-ribose 1-phosphate: step 4/6. Its function is as follows. Bifunctional enzyme that catalyzes the enolization of 2,3-diketo-5-methylthiopentyl-1-phosphate (DK-MTP-1-P) into the intermediate 2-hydroxy-3-keto-5-methylthiopentenyl-1-phosphate (HK-MTPenyl-1-P), which is then dephosphorylated to form the acireductone 1,2-dihydroxy-3-keto-5-methylthiopentene (DHK-MTPene). The polypeptide is Enolase-phosphatase E1 (Synechococcus sp. (strain CC9902)).